A 463-amino-acid chain; its full sequence is tRNA (guanine(37)-N(1))-methyltransferase (463 aa).

S-adenosyl-L-methionine is bound by residues H207, 245 to 246 (DL), 274 to 275 (DG), and N305.

Belongs to the class I-like SAM-binding methyltransferase superfamily. TRM5/TYW2 family. Monomer.

The protein resides in the mitochondrion matrix. It localises to the nucleus. The protein localises to the cytoplasm. The catalysed reaction is guanosine(37) in tRNA + S-adenosyl-L-methionine = N(1)-methylguanosine(37) in tRNA + S-adenosyl-L-homocysteine + H(+). Specifically methylates the N1 position of guanosine-37 in various cytoplasmic and mitochondrial tRNAs. Methylation is not dependent on the nature of the nucleoside 5' of the target nucleoside. This is the first step in the biosynthesis of wybutosine (yW), a modified base adjacent to the anticodon of tRNAs and required for accurate decoding. This chain is tRNA (guanine(37)-N(1))-methyltransferase, found in Pediculus humanus subsp. corporis (Body louse).